Here is a 206-residue protein sequence, read N- to C-terminus: Large ribosomal subunit protein uL4 (206 aa).

Residues 42 to 93 are disordered; the sequence is KKQQGTHKTKNRSEVSRTGAKMYKQKGTGRARHHSARAPQFRGGGKAHGPVV. A compositionally biased stretch (basic residues) spans 64 to 77; the sequence is YKQKGTGRARHHSA.

It belongs to the universal ribosomal protein uL4 family. As to quaternary structure, part of the 50S ribosomal subunit.

Functionally, one of the primary rRNA binding proteins, this protein initially binds near the 5'-end of the 23S rRNA. It is important during the early stages of 50S assembly. It makes multiple contacts with different domains of the 23S rRNA in the assembled 50S subunit and ribosome. Its function is as follows. Forms part of the polypeptide exit tunnel. In Agrobacterium fabrum (strain C58 / ATCC 33970) (Agrobacterium tumefaciens (strain C58)), this protein is Large ribosomal subunit protein uL4.